The sequence spans 230 residues: MEKLLWCLLITISFSQAFGHEDMSKQAFVFPGVSATAYVSLEAESKKPLEAFTVCLYAHADVSRSFSIFSYATKTSFNEILLFWTRGQGFSIAVGGPEILFSASEIPEVPTHICATWESATGIVELWLDGKPRVRKSLQKGYIVGTNASIILGQEQDSYGGGFDANQSLVGDIGDVNMWDFVLSPEQINAVYVGRVFSPNVLNWRALKYETHGDVFIKPQLWPLTDCCES.

A signal peptide spans 1–19; that stretch reads MEKLLWCLLITISFSQAFG. One can recognise a Pentraxin (PTX) domain in the interval 24–223; the sequence is SKQAFVFPGV…DVFIKPQLWP (200 aa). Cysteine 55 and cysteine 114 are oxidised to a cystine. Asparagine 78 is a binding site for Ca(2+). The N-linked (GlcNAc...) asparagine glycan is linked to asparagine 147. Positions 155, 156, 157, and 167 each coordinate Ca(2+). The cysteines at positions 227 and 228 are disulfide-linked.

The protein belongs to the pentraxin family. Homopentamer; disulfide-linked. Pentraxin (or pentaxin) have a discoid arrangement of 5 non-covalently bound subunits. Two of the five chains form a dimer linked by two interchain disulfide bonds located in the C-terminal heptapeptide and specific to rat CRP. Interacts with FCN1; may regulate monocyte activation by FCN1. Ca(2+) is required as a cofactor. Post-translationally, the last two cysteines are involved either in interchain disulfide bonds or in an intrachain bond. In terms of tissue distribution, found in plasma.

It localises to the secreted. In terms of biological role, displays several functions associated with host defense: it promotes agglutination, bacterial capsular swelling, phagocytosis and complement fixation through its calcium-dependent binding to phosphorylcholine. Can interact with DNA and histones and may scavenge nuclear material released from damaged circulating cells. The protein is C-reactive protein (Crp) of Rattus norvegicus (Rat).